Consider the following 157-residue polypeptide: ATP synthase subunit delta (157 aa).

Belongs to the ATPase delta chain family. In terms of assembly, F-type ATPases have 2 components, F(1) - the catalytic core - and F(0) - the membrane proton channel. F(1) has five subunits: alpha(3), beta(3), gamma(1), delta(1), epsilon(1). F(0) has three main subunits: a(1), b(2) and c(10-14). The alpha and beta chains form an alternating ring which encloses part of the gamma chain. F(1) is attached to F(0) by a central stalk formed by the gamma and epsilon chains, while a peripheral stalk is formed by the delta and b chains.

The protein localises to the cell membrane. F(1)F(0) ATP synthase produces ATP from ADP in the presence of a proton or sodium gradient. F-type ATPases consist of two structural domains, F(1) containing the extramembraneous catalytic core and F(0) containing the membrane proton channel, linked together by a central stalk and a peripheral stalk. During catalysis, ATP synthesis in the catalytic domain of F(1) is coupled via a rotary mechanism of the central stalk subunits to proton translocation. Its function is as follows. This protein is part of the stalk that links CF(0) to CF(1). It either transmits conformational changes from CF(0) to CF(1) or is implicated in proton conduction. This Chloroflexus aurantiacus (strain ATCC 29364 / DSM 637 / Y-400-fl) protein is ATP synthase subunit delta.